Reading from the N-terminus, the 119-residue chain is Phosphoribosyl-AMP cyclohydrolase (119 aa).

A Mg(2+)-binding site is contributed by Asp78. Cys79 provides a ligand contact to Zn(2+). Mg(2+) is bound by residues Asp80 and Asp82. Residues Cys95 and Cys102 each coordinate Zn(2+).

Belongs to the PRA-CH family. As to quaternary structure, homodimer. The cofactor is Mg(2+). Zn(2+) serves as cofactor.

It localises to the cytoplasm. It carries out the reaction 1-(5-phospho-beta-D-ribosyl)-5'-AMP + H2O = 1-(5-phospho-beta-D-ribosyl)-5-[(5-phospho-beta-D-ribosylamino)methylideneamino]imidazole-4-carboxamide. It participates in amino-acid biosynthesis; L-histidine biosynthesis; L-histidine from 5-phospho-alpha-D-ribose 1-diphosphate: step 3/9. Functionally, catalyzes the hydrolysis of the adenine ring of phosphoribosyl-AMP. The protein is Phosphoribosyl-AMP cyclohydrolase of Jannaschia sp. (strain CCS1).